The sequence spans 369 residues: DNA replication and repair protein RecF (369 aa).

ATP is bound at residue 30 to 37 (GDNGSGKT).

It belongs to the RecF family.

The protein localises to the cytoplasm. In terms of biological role, the RecF protein is involved in DNA metabolism; it is required for DNA replication and normal SOS inducibility. RecF binds preferentially to single-stranded, linear DNA. It also seems to bind ATP. The sequence is that of DNA replication and repair protein RecF from Pseudomonas aeruginosa (strain LESB58).